A 66-amino-acid chain; its full sequence is Disk-determining factor A (66 aa).

Functionally, involved in cell-shape determination. Required for the formation of disks. The sequence is that of Disk-determining factor A from Haloferax volcanii (strain ATCC 29605 / DSM 3757 / JCM 8879 / NBRC 14742 / NCIMB 2012 / VKM B-1768 / DS2) (Halobacterium volcanii).